A 94-amino-acid polypeptide reads, in one-letter code: Integration host factor subunit beta (94 aa).

Belongs to the bacterial histone-like protein family. As to quaternary structure, heterodimer of an alpha and a beta chain.

In terms of biological role, this protein is one of the two subunits of integration host factor, a specific DNA-binding protein that functions in genetic recombination as well as in transcriptional and translational control. This chain is Integration host factor subunit beta, found in Dechloromonas aromatica (strain RCB).